Reading from the N-terminus, the 212-residue chain is Large ribosomal subunit protein uL3 (212 aa).

Q152 is modified (N5-methylglutamine).

This sequence belongs to the universal ribosomal protein uL3 family. Part of the 50S ribosomal subunit. Forms a cluster with proteins L14 and L19. Post-translationally, methylated by PrmB.

Its function is as follows. One of the primary rRNA binding proteins, it binds directly near the 3'-end of the 23S rRNA, where it nucleates assembly of the 50S subunit. The protein is Large ribosomal subunit protein uL3 of Chromohalobacter salexigens (strain ATCC BAA-138 / DSM 3043 / CIP 106854 / NCIMB 13768 / 1H11).